Consider the following 252-residue polypeptide: uncharacterized protein (252 aa).

9-33 (LITGGSAGIGLELAKRLLELGNEVI) contributes to the NADP(+) binding site. Ser139 is a substrate binding site. Tyr152 functions as the Proton acceptor in the catalytic mechanism.

The protein belongs to the short-chain dehydrogenases/reductases (SDR) family.

It is found in the cytoplasm. This is an uncharacterized protein from Bacillus subtilis (strain 168).